The sequence spans 369 residues: Anhydro-N-acetylmuramic acid kinase (369 aa).

ATP is bound at residue 12–19 (GTSMDGVD).

The protein belongs to the anhydro-N-acetylmuramic acid kinase family.

It carries out the reaction 1,6-anhydro-N-acetyl-beta-muramate + ATP + H2O = N-acetyl-D-muramate 6-phosphate + ADP + H(+). The protein operates within amino-sugar metabolism; 1,6-anhydro-N-acetylmuramate degradation. It functions in the pathway cell wall biogenesis; peptidoglycan recycling. Catalyzes the specific phosphorylation of 1,6-anhydro-N-acetylmuramic acid (anhMurNAc) with the simultaneous cleavage of the 1,6-anhydro ring, generating MurNAc-6-P. Is required for the utilization of anhMurNAc either imported from the medium or derived from its own cell wall murein, and thus plays a role in cell wall recycling. This chain is Anhydro-N-acetylmuramic acid kinase, found in Shewanella putrefaciens (strain CN-32 / ATCC BAA-453).